A 185-amino-acid chain; its full sequence is NADH-quinone oxidoreductase subunit B (185 aa).

[4Fe-4S] cluster contacts are provided by C38, C39, C104, and C133. Residues 165 to 176 (AAEAYREEERQA) show a composition bias toward basic and acidic residues. Residues 165-185 (AAEAYREEERQAARSALGPRS) form a disordered region.

This sequence belongs to the complex I 20 kDa subunit family. NDH-1 is composed of 14 different subunits. Subunits NuoB, C, D, E, F, and G constitute the peripheral sector of the complex. The cofactor is [4Fe-4S] cluster.

It is found in the cell membrane. The enzyme catalyses a quinone + NADH + 5 H(+)(in) = a quinol + NAD(+) + 4 H(+)(out). Its function is as follows. NDH-1 shuttles electrons from NADH, via FMN and iron-sulfur (Fe-S) centers, to quinones in the respiratory chain. The immediate electron acceptor for the enzyme in this species is believed to be ubiquinone. Couples the redox reaction to proton translocation (for every two electrons transferred, four hydrogen ions are translocated across the cytoplasmic membrane), and thus conserves the redox energy in a proton gradient. The sequence is that of NADH-quinone oxidoreductase subunit B from Thermomicrobium roseum (strain ATCC 27502 / DSM 5159 / P-2).